A 212-amino-acid chain; its full sequence is Thiamine-phosphate synthase (212 aa).

4-amino-2-methyl-5-(diphosphooxymethyl)pyrimidine-binding positions include 41–45 and Asp76; that span reads QYREK. Mg(2+) contacts are provided by Asp77 and Asp96. Ser114 contributes to the 4-amino-2-methyl-5-(diphosphooxymethyl)pyrimidine binding site. 141–143 lines the 2-[(2R,5Z)-2-carboxy-4-methylthiazol-5(2H)-ylidene]ethyl phosphate pocket; it reads TTS. Lys144 lines the 4-amino-2-methyl-5-(diphosphooxymethyl)pyrimidine pocket. 2-[(2R,5Z)-2-carboxy-4-methylthiazol-5(2H)-ylidene]ethyl phosphate-binding positions include Gly172 and 192-193; that span reads IS.

This sequence belongs to the thiamine-phosphate synthase family. Requires Mg(2+) as cofactor.

It carries out the reaction 2-[(2R,5Z)-2-carboxy-4-methylthiazol-5(2H)-ylidene]ethyl phosphate + 4-amino-2-methyl-5-(diphosphooxymethyl)pyrimidine + 2 H(+) = thiamine phosphate + CO2 + diphosphate. It catalyses the reaction 2-(2-carboxy-4-methylthiazol-5-yl)ethyl phosphate + 4-amino-2-methyl-5-(diphosphooxymethyl)pyrimidine + 2 H(+) = thiamine phosphate + CO2 + diphosphate. The catalysed reaction is 4-methyl-5-(2-phosphooxyethyl)-thiazole + 4-amino-2-methyl-5-(diphosphooxymethyl)pyrimidine + H(+) = thiamine phosphate + diphosphate. The protein operates within cofactor biosynthesis; thiamine diphosphate biosynthesis; thiamine phosphate from 4-amino-2-methyl-5-diphosphomethylpyrimidine and 4-methyl-5-(2-phosphoethyl)-thiazole: step 1/1. Functionally, condenses 4-methyl-5-(beta-hydroxyethyl)thiazole monophosphate (THZ-P) and 2-methyl-4-amino-5-hydroxymethyl pyrimidine pyrophosphate (HMP-PP) to form thiamine monophosphate (TMP). The chain is Thiamine-phosphate synthase from Leuconostoc citreum (strain KM20).